We begin with the raw amino-acid sequence, 333 residues long: Lipoyl synthase (333 aa).

The segment covering 1 to 15 (MSTLVESPVPSNDSQ) has biased composition (polar residues). A disordered region spans residues 1–34 (MSTLVESPVPSNDSQAAAPAAYDPTQKQKSQAKT). [4Fe-4S] cluster is bound by residues Cys80, Cys85, Cys91, Cys106, Cys110, Cys113, and Ser320. Residues 91-309 (CFGKGTATFM…EREAYAMGFT (219 aa)) form the Radical SAM core domain.

The protein belongs to the radical SAM superfamily. Lipoyl synthase family. [4Fe-4S] cluster is required as a cofactor.

It is found in the cytoplasm. The enzyme catalyses [[Fe-S] cluster scaffold protein carrying a second [4Fe-4S](2+) cluster] + N(6)-octanoyl-L-lysyl-[protein] + 2 oxidized [2Fe-2S]-[ferredoxin] + 2 S-adenosyl-L-methionine + 4 H(+) = [[Fe-S] cluster scaffold protein] + N(6)-[(R)-dihydrolipoyl]-L-lysyl-[protein] + 4 Fe(3+) + 2 hydrogen sulfide + 2 5'-deoxyadenosine + 2 L-methionine + 2 reduced [2Fe-2S]-[ferredoxin]. It functions in the pathway protein modification; protein lipoylation via endogenous pathway; protein N(6)-(lipoyl)lysine from octanoyl-[acyl-carrier-protein]: step 2/2. In terms of biological role, catalyzes the radical-mediated insertion of two sulfur atoms into the C-6 and C-8 positions of the octanoyl moiety bound to the lipoyl domains of lipoate-dependent enzymes, thereby converting the octanoylated domains into lipoylated derivatives. The protein is Lipoyl synthase of Bordetella parapertussis (strain 12822 / ATCC BAA-587 / NCTC 13253).